The chain runs to 139 residues: Glucanase inhibitor protein 3 (139 aa).

One can recognise a Peptidase S1 domain in the interval 1–138 (VLTLEKPSKF…GIEWINSVIK (138 aa)). 2 disulfides stabilise this stretch: Cys-61–Cys-73 and Cys-83–Cys-114.

This sequence belongs to the peptidase S1 family.

Its subcellular location is the secreted. Functionally, secreted effector that suppresses host plant glucan elicitor-mediated defense responses. Targets host endoglucanases and inhibits the endoglucanase-mediated release of elicitor-active glucan oligosaccharides from P.sojae cell walls. In Phytophthora sojae (Soybean stem and root rot agent), this protein is Glucanase inhibitor protein 3.